A 536-amino-acid chain; its full sequence is uncharacterized protein (536 aa).

2 disordered regions span residues 1-76 (MSFT…SPAS) and 204-237 (NWNS…SNKS). Low complexity-rich tracts occupy residues 7–76 (TSSV…SPAS) and 204–234 (NWNS…PSKS). Residues 247–267 (CSVAIPVGVVLILIGLGIFLW) form a helical membrane-spanning segment. Disordered stretches follow at residues 287 to 354 (YGFN…LLGG) and 373 to 536 (DASD…LNLF). Residues 290–326 (NPNQPSNFRSPNRAPSTNNRYRGWNGSPTPAAGNNTN) are compositionally biased toward polar residues. Residues 327-350 (GRPVAPRPSAGAGGANPPAASQPG) show a composition bias toward low complexity. A helical transmembrane segment spans residues 351-371 (LLGGSSNSAGPIAAATAAGVG). A compositionally biased stretch (polar residues) spans 403-424 (SASNEAEATMPPSNGSNFSEGL). The span at 430–454 (ESGPAVGAAGAAAEAAEHSGSGSDS) shows a compositional bias: low complexity. The span at 480–509 (SYGSRAALSSRSQSNLLSPTSTGASNQPNY) shows a compositional bias: polar residues. A compositionally biased stretch (low complexity) spans 517–527 (SSSNVSIPRSS).

It localises to the membrane. This is an uncharacterized protein from Schizosaccharomyces pombe (strain 972 / ATCC 24843) (Fission yeast).